A 96-amino-acid polypeptide reads, in one-letter code: Dynein light chain roadblock-type 2 (96 aa).

Ala2 is modified (N-acetylalanine).

It belongs to the GAMAD family. In terms of assembly, homodimer. The cytoplasmic dynein 1 complex consists of two catalytic heavy chains (HCs) and a number of non-catalytic subunits presented by intermediate chains (ICs), light intermediate chains (LICs) and light chains (LCs); the composition seems to vary in respect to the IC, LIC and LC composition. The heavy chain homodimer serves as a scaffold for the probable homodimeric assembly of the respective non-catalytic subunits. The ICs and LICs bind directly to the HC dimer and the LCs assemble on the IC dimer. Interacts with DYNC1I1 and DYNC1I2. Self-associates. Interacts with DYNLRB1.

Its subcellular location is the cytoplasm. It is found in the cytoskeleton. Functionally, acts as one of several non-catalytic accessory components of the cytoplasmic dynein 1 complex that are thought to be involved in linking dynein to cargos and to adapter proteins that regulate dynein function. Cytoplasmic dynein 1 acts as a motor for the intracellular retrograde motility of vesicles and organelles along microtubules. The sequence is that of Dynein light chain roadblock-type 2 (DYNLRB2) from Bos taurus (Bovine).